We begin with the raw amino-acid sequence, 5537 residues long: Histone-lysine N-methyltransferase 2D (5537 aa).

Residues 1–60 form a disordered region; it reads MDSQKLAGEDKDSEPAADGPAASEDPSATESDLPNPHVGEVSVLSSGSPRLQETPQDCSG. Position 27 is a phosphoserine (S27). Residues 43-57 show a composition bias toward polar residues; that stretch reads VLSSGSPRLQETPQD. A C2HC pre-PHD-type 1; degenerate zinc finger spans residues 104-149; it reads GPNEAVLPSEDLSQIGFPEGLTPAHLGEPGGSCWAHHWCAAWSAGV. PHD-type zinc fingers lie at residues 170–218, 226–276, and 273–323; these read QRCS…PEHS, EARC…CKVC, and CKVC…CRVC. The segment at 229-274 adopts an RING-type 1; atypical zinc-finger fold; that stretch reads CAVCEGPGELCDLFFCTSCGHHYHGACLDTALTARKRAGWQCPECK. Residues 276 to 321 form an RING-type 2; degenerate zinc finger; it reads CQACRKPGNDSKMLVCETCDKGYHTFCLKPPMEELPAHSWKCKACR. Disordered stretches follow at residues 368–387, 393–416, 436–1331, and 1340–1359; these read VCSR…EPDA, QGQP…QCEA, EEMP…RLKS, and VVAD…DDDT. Residues 439-668 are 15 X 5 AA repeats of S/P-P-P-E/P-E/A; the sequence is PLLPPPEESP…VSRLSPPPEE (230 aa). Over residues 440–473 the composition is skewed to pro residues; the sequence is LLPPPEESPLSPPPEESPTSPPPEASRLSPPPEE. Tandem repeats lie at residues 442-446, 460-464, and 469-473. The span at 474 to 483 shows a compositional bias: low complexity; the sequence is LPASPLPEAL. Residues 494-509 show a composition bias toward pro residues; that stretch reads LSPPPEESPLSPPPES. 2 tandem repeats follow at residues 496-500 and 504-508. The segment covering 510–519 has biased composition (low complexity); sequence SPFSPLEESP. Composition is skewed to pro residues over residues 520-547 and 554-595; these read LSPP…PLSP and LSPP…PPPE. Repeat copies occupy residues 521-525, 555-559, 564-568, 573-577, and 582-586. Residues 596–607 are compositionally biased toward low complexity; it reads ASRLFPPFEESP. A compositionally biased stretch (pro residues) spans 608–649; the sequence is LSPPPEESPLSPPPEASRLSPPPEDSPMSPPPEESPMSPPPE. Repeat copies occupy residues 609–613, 618–622, 627–631, and 645–649. Low complexity predominate over residues 650 to 662; it reads VSRLSPLPVVSRL. Repeat unit 15 spans residues 663-667; sequence SPPPE. Residues 663–712 show a composition bias toward pro residues; it reads SPPPEESPLSPPPEESPTSPPPEASRLSPPPEDSPTSPPPEDSPASPPPE. Over residues 713 to 725 the composition is skewed to low complexity; the sequence is DSLMSLPLEESPL. At S744 the chain carries Phosphoserine. Basic and acidic residues-rich tracts occupy residues 745 to 760 and 845 to 869; these read PRPE…EEPH and RPEE…KPPE. 2 stretches are compositionally biased toward low complexity: residues 889–903 and 911–928; these read PSLS…LSEP and LPEE…LSPQ. The segment covering 929–940 has biased composition (pro residues); the sequence is LMPPDPLPPPLS. The span at 941–954 shows a compositional bias: low complexity; sequence PIITAAAPPALSPL. Over residues 994 to 1008 the composition is skewed to pro residues; sequence EPVPPMILPPSPGSP. The span at 1048-1057 shows a compositional bias: low complexity; it reads PLSVPSPLSP. The segment covering 1068-1080 has biased composition (basic and acidic residues); it reads AELHEMETEKVSE. S1151 bears the Phosphoserine mark. T1195 is subject to Phosphothreonine. Positions 1207 to 1216 are enriched in polar residues; it reads EISNLSQGDA. S1249 carries the post-translational modification Phosphoserine. Position 1267 is a phosphothreonine (T1267). S1270 carries the post-translational modification Phosphoserine. Basic residues-rich tracts occupy residues 1289 to 1302 and 1310 to 1329; these read GRRR…RIKQ and GRRR…RARL. PHD-type zinc fingers lie at residues 1377-1430, 1427-1477, and 1504-1559; these read QDMC…CIVC, CIVC…CVSC, and LVTC…CQPY. Residues 1507-1557 form an RING-type 3; atypical zinc finger; it reads CPICHAPYVEEDLLIQCRHCERWMHAGCESLFTEDDVEQAADEGFDCVSCQ. Residue S1606 is modified to Phosphoserine. Disordered regions lie at residues 1610 to 1767, 1793 to 1889, 1904 to 2002, and 2165 to 2683; these read KRRQ…LEDM, GVGR…MESK, EQHL…NQRS, and PQVP…QRQR. The segment covering 1637-1666 has biased composition (basic and acidic residues); it reads PDDKKDGDLDTDELLKGEGGVEHMECEIKL. A Phosphoserine modification is found at S1671. The segment covering 1675-1685 has biased composition (basic and acidic residues); the sequence is EPGKEETEESK. 2 stretches are compositionally biased toward basic residues: residues 1702–1712 and 1753–1762; these read RQRKSHTRTKK and KQQRRGRKKS. Composition is skewed to basic and acidic residues over residues 1806 to 1825 and 1832 to 1841; these read AKGD…KGDD and EESRGLEGKA. S1820 and S1834 each carry phosphoserine. 2 positions are modified to phosphothreonine: T1843 and T1865. The segment covering 1874–1889 has biased composition (basic and acidic residues); the sequence is DLDRISTEELPKMESK. Over residues 1979 to 1990 the composition is skewed to low complexity; sequence TTPSTPTTPTTE. Residues 2190-2209 show a composition bias toward pro residues; that stretch reads PTAPPTYPPYPSPTGAPAQP. S2239 is subject to Phosphoserine. At T2240 the chain carries Phosphothreonine. K2246 bears the N6-acetyllysine mark. A phosphoserine mark is found at S2260 and S2274. The segment covering 2280–2292 has biased composition (basic and acidic residues); it reads ESRKALEVKKEEL. Phosphoserine is present on residues S2309, S2311, and S2342. Composition is skewed to pro residues over residues 2350-2365 and 2379-2393; these read QEPP…PPSH and AQPP…PPPE. Composition is skewed to low complexity over residues 2409–2431 and 2494–2505; these read SRVP…RPLS and FPAALPAGPAGE. R2535 bears the Asymmetric dimethylarginine mark. Pro residues predominate over residues 2547-2560; that stretch reads LKPPVPQPGLPPPH. Over residues 2574–2584 the composition is skewed to polar residues; the sequence is KPQSTNYTVAT. The span at 2589–2609 shows a compositional bias: low complexity; it reads PSGSPLGPSSGSTGESYGLSP. The segment covering 2610–2621 has biased composition (pro residues); that stretch reads LRPPSVLPPPAP. At S2640 the chain carries Phosphoserine. Positions 2669 to 2707 form a coiled coil; it reads MSGLSQTELEKQRQRQRLRELLIRQQIQRNTLRQEKETA. The short motif at 2686–2690 is the LXXLL motif 1 element; the sequence is LRELL. Disordered stretches follow at residues 2697-2814 and 2835-2996; these read RNTL…QQQQ and ARFP…LDDD. The segment covering 2707–2722 has biased composition (low complexity); that stretch reads AAAAAGAVGPPGSWGA. 2 stretches are compositionally biased toward polar residues: residues 2733–2746 and 2781–2790; these read SRGQ…QDKS and PSSMDVNSRQ. R2836 carries the asymmetric dimethylarginine modification. Residues 2931 to 2940 are compositionally biased toward pro residues; that stretch reads PQKPSAPPAP. The LXXLL motif 2 motif lies at 3038-3042; it reads LDDLL. Positions 3078–3110 are disordered; that stretch reads EKAEREALLRGVEPGPLGPEERPPPAADASEPR. K3079 is modified (N6-acetyllysine). Position 3130 is a phosphoserine (S3130). 2 disordered regions span residues 3147-3209 and 3263-3339; these read ANSL…GSSL and KQQL…AHAL. T3197 bears the Phosphothreonine mark. 3 stretches are compositionally biased toward low complexity: residues 3198–3209, 3263–3289, and 3301–3320; these read PSPLSGPGGSSL, KQQL…LSAP, and GSSP…LAGA. Position 3199 is a phosphoserine (S3199). A coiled-coil region spans residues 3249–3282; sequence IEDLLEHEKKELQKKQQLSAQLQPAQQQQQQQQQ. A compositionally biased stretch (pro residues) spans 3325–3334; that stretch reads LPQPLMPTQP. K3433 carries the post-translational modification N6-acetyllysine. Disordered regions lie at residues 3462–3499 and 3596–3673; these read LSGG…TFAQ and RNKQ…GPFL. Residues 3562–3614 are a coiled coil; that stretch reads EKLKLVTEQQSKIQKQLDQVRKQQKEHTNLMAEYRNKQQQQQQQQQQQQQQHS. Low complexity-rich tracts occupy residues 3599–3612 and 3631–3643; these read QQQQ…QQQQ and LPGQ…GLQP. A coiled-coil region spans residues 3714 to 3750; it reads RLLQERQLQLQQQRMQLAQKLQQQQQQQQQQQHLLGQ. The residue at position 3727 (R3727) is an Asymmetric dimethylarginine. The tract at residues 3758–3802 is disordered; the sequence is QQGPGVQTNQALGPKPQGLMPPSSHQGLLVQQLSPQPPQGPQGML. A coiled-coil region spans residues 3897 to 3975; sequence LQQLQQQQQL…FQQQQQQQQM (79 aa). Residues 3984–4191 form a disordered region; it reads LLSPQQQQQQ…GQGLPGVGIM (208 aa). A compositionally biased stretch (low complexity) spans 4012–4023; that stretch reads PGALGPTLLLTG. Polar residues predominate over residues 4024 to 4045; it reads KEQNTVDPAVSSEATEGPSTHQ. The span at 4073–4108 shows a compositional bias: low complexity; sequence SQLLLVQPQPQPQPSSLQLQPPLRLPGQQQQQVSLL. The segment covering 4111–4120 has biased composition (gly residues); that stretch reads AGGGSHGQLG. The span at 4137–4154 shows a compositional bias: polar residues; it reads PSVSLGDQPGSMTQNLLG. R4198 is subject to Asymmetric dimethylarginine. Position 4215 is a phosphoserine (S4215). Residues 4222–4226 carry the LXXLL motif 3 motif; sequence LQALL. 2 disordered regions span residues 4233-4398 and 4410-4452; these read QSQA…VPGH and ASQL…LLLA. Positions 4237–4251 are enriched in polar residues; it reads VRQTPPYQEPGTQTS. Residues 4252-4282 show a composition bias toward low complexity; the sequence is PLQGLLGCQPQLGGFPGPQTGPLQELGAGPR. Positions 4253–4257 match the LXXLL motif 4 motif; the sequence is LQGLL. Positions 4283-4293 are enriched in pro residues; sequence PQGPPRLPAPP. Low complexity-rich tracts occupy residues 4294-4305 and 4320-4331; these read GALSTGPVLGPV and PSQLPSPSSQLP. A compositionally biased stretch (pro residues) spans 4338–4357; that stretch reads PTHPGTPKPQGPTLEPPPGR. S4359 carries the post-translational modification Phosphoserine. An LXXLL motif 5 motif is present at residues 4463–4467; sequence LQKLL. Residue K4465 is modified to N6-acetyllysine. Disordered regions lie at residues 4503 to 4544 and 4613 to 4727; these read QGTP…KEDG and KNNL…HLGS. Positions 4619–4633 are enriched in pro residues; it reads PPTPPSSLPPTPPPS. Residues 4648-4673 are compositionally biased toward basic and acidic residues; the sequence is LGEHPKDAASARDSERALRDTSEVKS. S4738 bears the Phosphoserine mark. K4756 is covalently cross-linked (Glycyl lysine isopeptide (Lys-Gly) (interchain with G-Cter in SUMO2)). Position 4776 is an N6-acetyllysine (K4776). S4822 and S4849 each carry phosphoserine. Positions 4822-4857 are disordered; sequence SPARAGTEPKKGEAEGPGGKEKGLEGKSPDTGPDWL. Residues 4828–4849 are compositionally biased toward basic and acidic residues; that stretch reads TEPKKGEAEGPGGKEKGLEGKS. Residue K4880 forms a Glycyl lysine isopeptide (Lys-Gly) (interchain with G-Cter in SUMO2) linkage. The interval 4905–4980 is disordered; that stretch reads QLSAPPPEEP…GEDSRPPRLK (76 aa). Positions 4908–4931 are enriched in pro residues; it reads APPPEEPSPPPSPLAPSPASPPTE. Residues 4932–4941 are compositionally biased toward low complexity; it reads PLVELPTEPL. The segment covering 4966 to 4976 has biased composition (basic and acidic residues); that stretch reads RPPEEGEDSRP. An LXXLL motif 6 motif is present at residues 4990 to 4994; sequence LRLLL. A C2HC pre-PHD-type 2 zinc finger spans residues 5029 to 5069; it reads MRRCCFCHEEGDGATDGPARLLNLDLDLWVHLNCALWSTEV. Residues 5090-5137 form a PHD-type 7 zinc finger; it reads TKCSLCQRTGATSSCNRMRCPNVYHFACAIRAKCMFFKDKTMLCPMHK. Residues 5175–5235 form the FYR N-terminal domain; sequence LHMFRVGGLV…CCYRCSIGEN (61 aa). One can recognise an FYR C-terminal domain in the interval 5236–5321; sequence NGRPEFVIKV…ESCQNYLFRY (86 aa). A WDR5 interaction motif (WIN) motif is present at residues 5337–5342; it reads GCARSE. Residues 5397–5513 enclose the SET domain; sequence NNVYLARSRI…KGEELTYDYQ (117 aa). S-adenosyl-L-methionine contacts are provided by residues Y5451 and 5474 to 5475; that span reads NH. Zn(2+)-binding residues include C5477, C5525, C5527, and C5532. Positions 5521-5537 constitute a Post-SET domain; the sequence is HKIPCHCGAWNCRKWMN.

The protein belongs to the class V-like SAM-binding methyltransferase superfamily. Histone-lysine methyltransferase family. TRX/MLL subfamily. In terms of assembly, component of the MLL2 complex (also named ASCOM complex), at least composed of catalytic subunit KMT2D/MLL2, ASH2L, RBBP5, WDR5, NCOA6, DPY30, KDM6A, PAXIP1/PTIP, PAGR1 and alpha- and beta-tubulin. Forms a core complex with the evolutionary conserved subcomplex WRAD composed of WDR5, RBBP5, ASH2L/ASH2 and DPY30 subunits; WRAD differentially stimulates the methyltransferase activity. Interacts with ESR1; interaction is direct. Interacts (via WIN motif) with WDR5. In terms of tissue distribution, expressed in most adult tissues, including a variety of hematoipoietic cells, with the exception of the liver.

It localises to the nucleus. The catalysed reaction is L-lysyl(4)-[histone H3] + S-adenosyl-L-methionine = N(6)-methyl-L-lysyl(4)-[histone H3] + S-adenosyl-L-homocysteine + H(+). Histone methyltransferase that catalyzes methyl group transfer from S-adenosyl-L-methionine to the epsilon-amino group of 'Lys-4' of histone H3 (H3K4). Part of chromatin remodeling machinery predominantly forms H3K4me1 methylation marks at active chromatin sites where transcription and DNA repair take place. Acts as a coactivator for estrogen receptor by being recruited by ESR1, thereby activating transcription. This chain is Histone-lysine N-methyltransferase 2D (KMT2D), found in Homo sapiens (Human).